We begin with the raw amino-acid sequence, 329 residues long: Calcium homeostasis modulator protein (329 aa).

The Cytoplasmic portion of the chain corresponds to 1-14; the sequence is MTTSINSVVTVFQN. Residues 15-35 traverse the membrane as a helical segment; that stretch reads VFTNHGSTLLNGILIATTVGG. Over 36 to 53 the chain is Extracellular; sequence QSLVRKLTFSCPCAYPLN. Residues 54–74 form a helical membrane-spanning segment; sequence IYHSLVFMFGPTAALLLIGIT. The Cytoplasmic segment spans residues 75–103; sequence VNSTTWKLAHGFFFRVRDTRHSWKTTCVS. The chain crosses the membrane as a helical span at residues 104–124; it reads WIEVLIQSSVAPIAWLFVVFL. Residues 125 to 191 are Extracellular-facing; it reads DGGYYRCYRS…DASYLEAESQ (67 aa). Asn-148 carries an N-linked (GlcNAc...) asparagine glycan. A helical membrane pass occupies residues 192-212; sequence IYAWGLLLFSGVAAFLVITCN. Residues 213–329 are Cytoplasmic-facing; the sequence is RMCDKYTLVQ…QIIVDETKED (117 aa).

The protein belongs to the CALHM family. Expressed in head and body wall muscles, IL2, ASG, ASI, ASJ, PHA and PHB sensory neurons, and spermatheca.

It localises to the cell membrane. Functionally, pore-forming subunit of a voltage-gated ion channel. Permeable to monovalent cations, divalent cations and anions with selectivity Ca(2+) &gt; Mg(2+) &gt; Na(+) = K(+) &gt; Cl(-). Acts both as a voltage-gated and calcium-activated ion channel. Required for normal locomotion. The polypeptide is Calcium homeostasis modulator protein (Caenorhabditis elegans).